The sequence spans 472 residues: Glutamate--tRNA ligase 1 (472 aa).

The 'HIGH' region signature appears at 9–19 (PSPTGLLHVGN). A compositionally biased stretch (basic and acidic residues) spans 112–131 (AMAEKRPPRYDGTWRDRDPS). The tract at residues 112 to 133 (AMAEKRPPRYDGTWRDRDPSEA) is disordered. A 'KMSKS' region motif is present at residues 238 to 242 (KLSKR). An ATP-binding site is contributed by lysine 241.

The protein belongs to the class-I aminoacyl-tRNA synthetase family. Glutamate--tRNA ligase type 1 subfamily. As to quaternary structure, monomer.

The protein localises to the cytoplasm. The catalysed reaction is tRNA(Glu) + L-glutamate + ATP = L-glutamyl-tRNA(Glu) + AMP + diphosphate. In terms of biological role, catalyzes the attachment of glutamate to tRNA(Glu) in a two-step reaction: glutamate is first activated by ATP to form Glu-AMP and then transferred to the acceptor end of tRNA(Glu). The sequence is that of Glutamate--tRNA ligase 1 from Gluconobacter oxydans (strain 621H) (Gluconobacter suboxydans).